The following is a 62-amino-acid chain: Large ribosomal subunit protein bL28 (62 aa).

The protein belongs to the bacterial ribosomal protein bL28 family.

This chain is Large ribosomal subunit protein bL28, found in Helicobacter pylori (strain Shi470).